Reading from the N-terminus, the 238-residue chain is Large ribosomal subunit protein uL1 (238 aa).

It belongs to the universal ribosomal protein uL1 family. Part of the 50S ribosomal subunit.

In terms of biological role, binds directly to 23S rRNA. The L1 stalk is quite mobile in the ribosome, and is involved in E site tRNA release. Protein L1 is also a translational repressor protein, it controls the translation of the L11 operon by binding to its mRNA. This chain is Large ribosomal subunit protein uL1, found in Salinispora tropica (strain ATCC BAA-916 / DSM 44818 / JCM 13857 / NBRC 105044 / CNB-440).